The chain runs to 151 residues: Mating pheromone 3 (151 aa).

Positions 1–16 are cleaved as a signal peptide; the sequence is MKAIFIILAILMVTQA. Residues 17-52 constitute a propeptide that is removed on maturation; it reads FKMTSKVNTKLQSQIQSKFQSKNKLASTFQTSSQLK.

The protein resides in the secreted. Its function is as follows. Mating ciliate pheromones (or gamones) are diffusible extracellular communication signals that distinguish different intraspecific classes of cells commonly referred to as 'mating types'. They prepare the latter for conjugation by changing their cell surface properties. The sequence is that of Mating pheromone 3 (PHR3) from Euplotoides octocarinatus (Freshwater ciliate).